The sequence spans 182 residues: ATP synthase subunit delta (182 aa).

This sequence belongs to the ATPase delta chain family. F-type ATPases have 2 components, F(1) - the catalytic core - and F(0) - the membrane proton channel. F(1) has five subunits: alpha(3), beta(3), gamma(1), delta(1), epsilon(1). F(0) has three main subunits: a(1), b(2) and c(10-14). The alpha and beta chains form an alternating ring which encloses part of the gamma chain. F(1) is attached to F(0) by a central stalk formed by the gamma and epsilon chains, while a peripheral stalk is formed by the delta and b chains.

Its subcellular location is the cell membrane. F(1)F(0) ATP synthase produces ATP from ADP in the presence of a proton or sodium gradient. F-type ATPases consist of two structural domains, F(1) containing the extramembraneous catalytic core and F(0) containing the membrane proton channel, linked together by a central stalk and a peripheral stalk. During catalysis, ATP synthesis in the catalytic domain of F(1) is coupled via a rotary mechanism of the central stalk subunits to proton translocation. In terms of biological role, this protein is part of the stalk that links CF(0) to CF(1). It either transmits conformational changes from CF(0) to CF(1) or is implicated in proton conduction. This is ATP synthase subunit delta from Desulforudis audaxviator (strain MP104C).